Here is a 477-residue protein sequence, read N- to C-terminus: Glycogen synthase (477 aa).

An ADP-alpha-D-glucose-binding site is contributed by K15.

It belongs to the glycosyltransferase 1 family. Bacterial/plant glycogen synthase subfamily.

The enzyme catalyses [(1-&gt;4)-alpha-D-glucosyl](n) + ADP-alpha-D-glucose = [(1-&gt;4)-alpha-D-glucosyl](n+1) + ADP + H(+). It participates in glycan biosynthesis; glycogen biosynthesis. Its function is as follows. Synthesizes alpha-1,4-glucan chains using ADP-glucose. The chain is Glycogen synthase from Myxococcus xanthus (strain DK1622).